A 444-amino-acid polypeptide reads, in one-letter code: Ribosomal protein uS12 methylthiotransferase RimO (444 aa).

Residues 3 to 119 (IKIGLVSLGC…IARAVRRVLE (117 aa)) enclose the MTTase N-terminal domain. The [4Fe-4S] cluster site is built by Cys12, Cys48, Cys82, Cys156, Cys160, and Cys163. Residues 142-372 (ATPPYTAYLK…MMLQQEISLQ (231 aa)) form the Radical SAM core domain. The region spanning 375–444 (LKRVGEVIEV…EYDLTGETVL (70 aa)) is the TRAM domain.

It belongs to the methylthiotransferase family. RimO subfamily. It depends on [4Fe-4S] cluster as a cofactor.

The protein resides in the cytoplasm. It carries out the reaction L-aspartate(89)-[ribosomal protein uS12]-hydrogen + (sulfur carrier)-SH + AH2 + 2 S-adenosyl-L-methionine = 3-methylsulfanyl-L-aspartate(89)-[ribosomal protein uS12]-hydrogen + (sulfur carrier)-H + 5'-deoxyadenosine + L-methionine + A + S-adenosyl-L-homocysteine + 2 H(+). Functionally, catalyzes the methylthiolation of an aspartic acid residue of ribosomal protein uS12. This Pelotomaculum thermopropionicum (strain DSM 13744 / JCM 10971 / SI) protein is Ribosomal protein uS12 methylthiotransferase RimO.